The chain runs to 37 residues: Large ribosomal subunit protein bL36 (37 aa).

Belongs to the bacterial ribosomal protein bL36 family.

The polypeptide is Large ribosomal subunit protein bL36 (Nitratidesulfovibrio vulgaris (strain ATCC 29579 / DSM 644 / CCUG 34227 / NCIMB 8303 / VKM B-1760 / Hildenborough) (Desulfovibrio vulgaris)).